A 158-amino-acid chain; its full sequence is MKLISNDLRDGDKLPHRHVFNGMGYDGDNISPHLAWDDVPAGTKSFVVTCYDPDAPTGSGWWHWVVVNLPADTRVLPQGFGSGLVAMPDGVLQTRTDFGKTGYDGAAPPKGETHRYIFTVHALDIERIDVDEGASGAMVGFNVHFHSLASASITAMFS.

It belongs to the UPF0098 family. As to quaternary structure, homodimer.

It localises to the cytoplasm. The protein is UPF0098 protein YbhB (ybhB) of Escherichia coli (strain K12).